The sequence spans 313 residues: 4-hydroxyproline 2-epimerase (313 aa).

The interval 1-23 is disordered; that stretch reads MHVIDSHTGGEPTRVILSGGPHL. Cys85 (proton acceptor) is an active-site residue. Residues 86–87, His205, and Asp231 each bind substrate; that span reads GH. Residue Cys235 is the Proton donor of the active site. 236-237 serves as a coordination point for substrate; it reads GT.

Belongs to the proline racemase family.

The enzyme catalyses trans-4-hydroxy-L-proline = cis-4-hydroxy-D-proline. Functionally, catalyzes the epimerization of trans-4-hydroxy-L-proline (t4LHyp) to cis-4-hydroxy-D-proline (c4DHyp). Is likely involved in a degradation pathway that converts t4LHyp to alpha-ketoglutarate. Displays no proline racemase activity. This Ruegeria pomeroyi (strain ATCC 700808 / DSM 15171 / DSS-3) (Silicibacter pomeroyi) protein is 4-hydroxyproline 2-epimerase.